We begin with the raw amino-acid sequence, 304 residues long: Acetyl-coenzyme A carboxylase carboxyl transferase subunit beta (304 aa).

The 270-residue stretch at L25–E294 folds into the CoA carboxyltransferase N-terminal domain.

This sequence belongs to the AccD/PCCB family. As to quaternary structure, acetyl-CoA carboxylase is a heterohexamer composed of biotin carboxyl carrier protein (AccB), biotin carboxylase (AccC) and two subunits each of ACCase subunit alpha (AccA) and ACCase subunit beta (AccD).

The protein resides in the cytoplasm. It catalyses the reaction N(6)-carboxybiotinyl-L-lysyl-[protein] + acetyl-CoA = N(6)-biotinyl-L-lysyl-[protein] + malonyl-CoA. Its pathway is lipid metabolism; malonyl-CoA biosynthesis; malonyl-CoA from acetyl-CoA: step 1/1. Functionally, component of the acetyl coenzyme A carboxylase (ACC) complex. Biotin carboxylase (BC) catalyzes the carboxylation of biotin on its carrier protein (BCCP) and then the CO(2) group is transferred by the transcarboxylase to acetyl-CoA to form malonyl-CoA. The chain is Acetyl-coenzyme A carboxylase carboxyl transferase subunit beta from Rhizobium meliloti (strain 1021) (Ensifer meliloti).